Here is a 104-residue protein sequence, read N- to C-terminus: Large ribosomal subunit protein bL21 (104 aa).

It belongs to the bacterial ribosomal protein bL21 family. In terms of assembly, part of the 50S ribosomal subunit. Contacts protein L20.

Functionally, this protein binds to 23S rRNA in the presence of protein L20. This Helicobacter pylori (strain Shi470) protein is Large ribosomal subunit protein bL21.